The sequence spans 427 residues: UDP-N-acetyl-D-mannosamine dehydrogenase (427 aa).

NAD(+)-binding residues include Y19, I20, D39, R44, T91, and T130. UDP-N-acetyl-alpha-D-mannosaminouronate contacts are provided by R155, V156, K207, N211, R214, H245, R247, and G258. K207 (proton donor/acceptor) is an active-site residue. C261 serves as the catalytic Nucleophile. UDP-N-acetyl-alpha-D-mannosaminouronate contacts are provided by Y318 and K319. R326 provides a ligand contact to NAD(+). K404 lines the UDP-N-acetyl-alpha-D-mannosaminouronate pocket.

The protein belongs to the UDP-glucose/GDP-mannose dehydrogenase family. As to quaternary structure, homotetramer; probably dimer of dimers.

The catalysed reaction is UDP-N-acetyl-alpha-D-mannosamine + 2 NAD(+) + H2O = UDP-N-acetyl-alpha-D-mannosaminouronate + 2 NADH + 3 H(+). Functionally, catalyzes the four-electron oxidation of UDP-N-acetyl-D-mannosamine (UDP-ManNAc), reducing NAD(+) and releasing UDP-N-acetylmannosaminuronic acid (UDP-ManNAcA). This chain is UDP-N-acetyl-D-mannosamine dehydrogenase (wecC), found in Methanococcus maripaludis (strain C7 / ATCC BAA-1331).